The sequence spans 202 residues: Orotate phosphoribosyltransferase (202 aa).

5-phospho-alpha-D-ribose 1-diphosphate-binding positions include K93 and 113 to 121 (EDIITTGGS). Orotate contacts are provided by T117 and R145.

It belongs to the purine/pyrimidine phosphoribosyltransferase family. PyrE subfamily. Homodimer. The cofactor is Mg(2+).

The enzyme catalyses orotidine 5'-phosphate + diphosphate = orotate + 5-phospho-alpha-D-ribose 1-diphosphate. It participates in pyrimidine metabolism; UMP biosynthesis via de novo pathway; UMP from orotate: step 1/2. Functionally, catalyzes the transfer of a ribosyl phosphate group from 5-phosphoribose 1-diphosphate to orotate, leading to the formation of orotidine monophosphate (OMP). The polypeptide is Orotate phosphoribosyltransferase (Campylobacter curvus (strain 525.92)).